The chain runs to 379 residues: Gonadotropin-releasing hormone II receptor (379 aa).

Topologically, residues 1 to 40 (MSAGNGTPWGSAVGEEAWAGSGVAVEGSELPTFSTAAKVR) are extracellular. Residues 41–60 (VGVTIVLFVSSAGGNLAVLW) traverse the membrane as a helical segment. Over 61–76 (SVTRPQPSQLRPSPVR) the chain is Cytoplasmic. The helical transmembrane segment at 77 to 96 (TLFAHLAAADLLVTFVVMPL) threads the bilayer. Over 97 to 114 (DATWNITVQWLAGDIACR) the chain is Extracellular. N101 is a glycosylation site (N-linked (GlcNAc...) asparagine). C113 and C188 are oxidised to a cystine. The helical transmembrane segment at 115-136 (TLMFLKLMAMYSAAFLPVVIGL) threads the bilayer. Residues 137 to 160 (DRQAAVLNPLGSRSGVRKLLGAAW) are Cytoplasmic-facing. A helical membrane pass occupies residues 161 to 178 (GLSFLLALPQLFLFHTVH). Topologically, residues 179-204 (RAGPVPFTQCVTKGSFKARWQETTYN) are extracellular. A helical membrane pass occupies residues 205-224 (LFTFCCLFLLPLIAMAICYS). Residues 225-278 (RIVLSVSSPQTRKGSHAPAGEFALRRSFDNRPRVCLRALRLALLILLTFILCWT) lie on the Cytoplasmic side of the membrane. A helical transmembrane segment spans residues 279–297 (PYYLLGLWYWFSPTMLTEV). Residues 298–303 (PPSLSH) lie on the Extracellular side of the membrane. Residues 304 to 323 (ILFLFGLLNAPLDPLLYGAF) traverse the membrane as a helical segment. Residues 324-379 (TFGCRRGHQELSIDSSKEGSGRMLQQEIHALRQQEVQKTVTSRSAGETKGISITSI) lie on the Cytoplasmic side of the membrane.

The protein belongs to the G-protein coupled receptor 1 family. Post-translationally, phosphorylated on the C-terminal cytoplasmic tail.

The protein localises to the cell membrane. Functionally, receptor for gonadotropin releasing hormone II (GnRH II). This receptor mediates its action by association with G proteins that activate a phosphatidylinositol-calcium second messenger system. This chain is Gonadotropin-releasing hormone II receptor (GNRHR2), found in Chlorocebus aethiops (Green monkey).